Here is a 337-residue protein sequence, read N- to C-terminus: 2-oxoglutarate receptor 1 (337 aa).

Residues 1–37 lie on the Extracellular side of the membrane; that stretch reads MIETLDSPANDSDFLDYITALENCTDEQISFKMQYLP. The N-linked (GlcNAc...) asparagine glycan is linked to asparagine 23. A helical membrane pass occupies residues 38–58; it reads VIYSIIFLVGFPGNTVAISIY. Residues 59–69 lie on the Cytoplasmic side of the membrane; that stretch reads VFKMRPWKSST. A helical transmembrane segment spans residues 70–90; it reads IIMLNLALTDLLYLTSLPFLI. The Extracellular portion of the chain corresponds to 91 to 116; that stretch reads HYYASGENWIFGDFMCKFIRFGFHFN. Cysteine 106 and cysteine 183 are oxidised to a cystine. Residues 117–137 traverse the membrane as a helical segment; sequence LYSSILFLTCFSLFRYIVIIH. At 138-151 the chain is on the cytoplasmic side; it reads PMSCFSIQKTRWAV. The chain crosses the membrane as a helical span at residues 152-172; it reads VACAGVWVISLVAVMPMTFLI. Residues 173 to 200 are Extracellular-facing; the sequence is TSTTRTNRSACLDLTSSDDLTTIKWYNL. A helical transmembrane segment spans residues 201 to 221; it reads ILTATTFCLPLLIVTLCYTTI. Over 222 to 242 the chain is Cytoplasmic; the sequence is ISTLTHGPRTHSCFKQKARRL. Residues 243–263 form a helical membrane-spanning segment; sequence TILLLLVFYVCFLPFHILRVI. Topologically, residues 264-284 are extracellular; it reads RIESRLLSISCSIESHIHEAY. Residues 285-305 form a helical membrane-spanning segment; sequence IVSRPLAALNTFGNLLLYVVV. Topologically, residues 306 to 337 are cytoplasmic; sequence SNNFQQAFCSAVRCKAIGDLEQAKKDSCSNNP.

This sequence belongs to the G-protein coupled receptor 1 family. Highly expressed in mast cells and is found predominantly in the tissues of the respiratory tract and kidneys.

It is found in the cell membrane. Functionally, g protein-coupled receptor for dicarboxylates and amino dicarboxylates. Receptor for itaconate, a metabolite produced by myeloid lineages. In the respiratory epithelium, couples the binding of itaconate to the activation of GNA11 and downstream intracellular Ca(2+) release, leading to mucocilliary clearance of airborne pathogens. Receptor for leukotriene E4 (LTE4) produced by mast cells upon allergic inflammation. Binds with high affinity to LTE4 and elicits mucin release from pulmonary epithelium in response to airborne fungi allergens. Regulates mucin-producing goblet cell homeostasis. Receptor for alpha-ketoglutarate produced by proximal tubule renal cells upon metabolic alkalosis. In an intrarenal paracrine signaling pathway, binds alpha-ketoglutarate and drives transepithelial salt reabsorption and bicarbonate secretion by SLC26A4/pendrin-positive intercalated cells. The sequence is that of 2-oxoglutarate receptor 1 (Oxgr1) from Rattus norvegicus (Rat).